We begin with the raw amino-acid sequence, 206 residues long: Ribosomal RNA large subunit methyltransferase E (206 aa).

Glycine 60, tryptophan 62, aspartate 80, aspartate 96, and aspartate 121 together coordinate S-adenosyl-L-methionine. Lysine 161 (proton acceptor) is an active-site residue.

Belongs to the class I-like SAM-binding methyltransferase superfamily. RNA methyltransferase RlmE family.

Its subcellular location is the cytoplasm. The catalysed reaction is uridine(2552) in 23S rRNA + S-adenosyl-L-methionine = 2'-O-methyluridine(2552) in 23S rRNA + S-adenosyl-L-homocysteine + H(+). Specifically methylates the uridine in position 2552 of 23S rRNA at the 2'-O position of the ribose in the fully assembled 50S ribosomal subunit. This chain is Ribosomal RNA large subunit methyltransferase E, found in Hahella chejuensis (strain KCTC 2396).